Here is a 347-residue protein sequence, read N- to C-terminus: 4-hydroxy-2-oxovalerate aldolase 2 (347 aa).

Residues 7–259 form the Pyruvate carboxyltransferase domain; that stretch reads VRITDTSLRD…KTGIDFFDIA (253 aa). 15–16 contacts substrate; the sequence is RD. Residue Asp-16 participates in Mn(2+) binding. Catalysis depends on His-19, which acts as the Proton acceptor. Residues Ser-169 and His-198 each coordinate substrate. Residues His-198 and His-200 each coordinate Mn(2+). A substrate-binding site is contributed by Tyr-289.

Belongs to the 4-hydroxy-2-oxovalerate aldolase family.

It carries out the reaction (S)-4-hydroxy-2-oxopentanoate = acetaldehyde + pyruvate. In Mycobacterium marinum (strain ATCC BAA-535 / M), this protein is 4-hydroxy-2-oxovalerate aldolase 2.